Reading from the N-terminus, the 374-residue chain is Potassium channel subfamily K member 9 (374 aa).

The Cytoplasmic portion of the chain corresponds to 1 to 8 (MKRQNVRT). The chain crosses the membrane as a helical span at residues 9–29 (LSLIICTFTYLLVGAAVFDAL). Residues 30-88 (ESDYEMREEEKLKAEEIRLKGKYNISSEDYRQLELVIMQSEPHRAGVQWKFAGSFYFAI) are Extracellular-facing. Residue N53 is glycosylated (N-linked (GlcNAc...) asparagine). Positions 89 to 101 (TVITTIGYGHAAP) form an intramembrane region, pore-forming. The Extracellular segment spans residues 102-107 (GTDAGK). The helical transmembrane segment at 108-128 (AFCMFYAVLGIPLTLVMFQSL) threads the bilayer. Residues 129–158 (GERMNTFVKYLLKRIKKCCGMHSTDVSMEN) are Cytoplasmic-facing. The chain crosses the membrane as a helical span at residues 159 to 179 (MVTVGFFSCMGTLCIGAAAFS). Over 180 to 194 (HYEEWSFFQAYYYCF) the chain is Extracellular. Positions 195-207 (ITLTTIGFGDYVA) form an intramembrane region, pore-forming. Over 208–218 (LQKNRALQKKP) the chain is Extracellular. The helical transmembrane segment at 219 to 239 (LYVAFSFMYILVGLTVIGAFL) threads the bilayer. Residues 240 to 374 (NLVVLRFLTM…HRLMKRRKSI (135 aa)) lie on the Cytoplasmic side of the membrane.

Belongs to the two pore domain potassium channel (TC 1.A.1.8) family. As to quaternary structure, homodimer. May form heterodimers with other family members.

The protein resides in the cell membrane. PH-dependent, voltage-insensitive, background potassium channel protein. The sequence is that of Potassium channel subfamily K member 9 (kcnk9) from Xenopus laevis (African clawed frog).